Here is a 303-residue protein sequence, read N- to C-terminus: Probable cell division protein WhiA (303 aa).

A DNA-binding region (H-T-H motif) is located at residues 272-303; the sequence is SIQQIADSLETPLSKSGVNHRLRKINKIADEL.

The protein belongs to the WhiA family.

Involved in cell division and chromosome segregation. The protein is Probable cell division protein WhiA of Streptococcus agalactiae serotype Ia (strain ATCC 27591 / A909 / CDC SS700).